The sequence spans 686 residues: Glycine--tRNA ligase beta subunit (686 aa).

Positions 65-99 are disordered; sequence ALSEEKRGPSVERAKDENGEWSKAAQGFARGQGAT. Residues 67-84 are compositionally biased toward basic and acidic residues; that stretch reads SEEKRGPSVERAKDENGE.

Belongs to the class-II aminoacyl-tRNA synthetase family. In terms of assembly, tetramer of two alpha and two beta subunits.

The protein localises to the cytoplasm. The enzyme catalyses tRNA(Gly) + glycine + ATP = glycyl-tRNA(Gly) + AMP + diphosphate. This is Glycine--tRNA ligase beta subunit from Leuconostoc citreum (strain KM20).